Reading from the N-terminus, the 285-residue chain is CCR4-NOT transcription complex subunit 7 (285 aa).

A divalent metal cation-binding residues include Asp40, Glu42, Asp161, Asp230, and Glu278.

It belongs to the CAF1 family. As to quaternary structure, component of the CCR4-NOT complex. Requires Mn(2+) as cofactor. Mg(2+) serves as cofactor. The cofactor is Co(2+).

The protein resides in the nucleus. The protein localises to the cytoplasm. The catalysed reaction is Exonucleolytic cleavage of poly(A) to 5'-AMP.. Functionally, has 3'-5' poly(A) exoribonuclease activity for synthetic poly(A) RNA substrate. Catalytic component of the CCR4-NOT complex which is one of the major cellular mRNA deadenylases and is linked to various cellular processes including bulk mRNA degradation, miRNA-mediated repression, translational repression during translational initiation and general transcription regulation. During miRNA-mediated repression the complex also seems to act as translational repressor during translational initiation. Additional complex functions may be a consequence of its influence on mRNA expression. This chain is CCR4-NOT transcription complex subunit 7 (CNOT7), found in Gallus gallus (Chicken).